The sequence spans 351 residues: Anthranilate phosphoribosyltransferase (351 aa).

5-phospho-alpha-D-ribose 1-diphosphate is bound by residues glycine 89, 92 to 93, threonine 97, 99 to 102, 117 to 125, and serine 129; these read GD, NIST, and KHGNRSASG. Residue glycine 89 coordinates anthranilate. Serine 101 lines the Mg(2+) pocket. Asparagine 120 is a binding site for anthranilate. An anthranilate-binding site is contributed by arginine 175. Mg(2+)-binding residues include aspartate 234 and glutamate 235.

The protein belongs to the anthranilate phosphoribosyltransferase family. Homodimer. Mg(2+) serves as cofactor.

It catalyses the reaction N-(5-phospho-beta-D-ribosyl)anthranilate + diphosphate = 5-phospho-alpha-D-ribose 1-diphosphate + anthranilate. The protein operates within amino-acid biosynthesis; L-tryptophan biosynthesis; L-tryptophan from chorismate: step 2/5. Catalyzes the transfer of the phosphoribosyl group of 5-phosphorylribose-1-pyrophosphate (PRPP) to anthranilate to yield N-(5'-phosphoribosyl)-anthranilate (PRA). This Synechococcus sp. (strain CC9902) protein is Anthranilate phosphoribosyltransferase.